The following is a 96-amino-acid chain: Pore-forming peptide amoebapore B (96 aa).

The N-terminal stretch at 1-19 (MRAIIFVLIFAIAFAATRE) is a signal peptide. The region spanning 20 to 96 (GAILCNLCKD…VVVCEKIHAC (77 aa)) is the Saposin B-type domain. Cystine bridges form between cysteine 24–cysteine 96, cysteine 27–cysteine 90, and cysteine 54–cysteine 65.

As to quaternary structure, monomer. Homodimer. Hexamer; formed during insertion in the membrane.

Its subcellular location is the cytoplasmic granule. Its function is as follows. Forms pores in the cell membrane of host cells. Has antibacterial activity against M.luteus, no activity against E.coli. Implicated in the cytolytic activity of the parasite. This is Pore-forming peptide amoebapore B from Entamoeba histolytica (strain ATCC 30459 / HM-1:IMSS / ABRM).